The primary structure comprises 303 residues: UDP-3-O-acyl-N-acetylglucosamine deacetylase (303 aa).

Residues histidine 78, histidine 237, and aspartate 241 each contribute to the Zn(2+) site. Histidine 264 functions as the Proton donor in the catalytic mechanism.

It belongs to the LpxC family. It depends on Zn(2+) as a cofactor.

The catalysed reaction is a UDP-3-O-[(3R)-3-hydroxyacyl]-N-acetyl-alpha-D-glucosamine + H2O = a UDP-3-O-[(3R)-3-hydroxyacyl]-alpha-D-glucosamine + acetate. It functions in the pathway glycolipid biosynthesis; lipid IV(A) biosynthesis; lipid IV(A) from (3R)-3-hydroxytetradecanoyl-[acyl-carrier-protein] and UDP-N-acetyl-alpha-D-glucosamine: step 2/6. Its function is as follows. Catalyzes the hydrolysis of UDP-3-O-myristoyl-N-acetylglucosamine to form UDP-3-O-myristoylglucosamine and acetate, the committed step in lipid A biosynthesis. This is UDP-3-O-acyl-N-acetylglucosamine deacetylase from Pseudomonas aeruginosa (strain LESB58).